Reading from the N-terminus, the 273-residue chain is Transmembrane protein 202 (273 aa).

Helical transmembrane passes span 53–75 (HIYIRTLCGSLCSFSLLMLIAMS), 121–141 (FFLISVFTILTGLGWLFSSWI), 155–175 (VSMLSFISATCLLLCLNLFVA), and 189–209 (LLWTYYLNWCSDIFYMFAGII). Positions 242–273 (TTVSPAKDEGPRSEMESLSVREKNLPKSGLWW) are disordered. Positions 247–266 (AKDEGPRSEMESLSVREKNL) are enriched in basic and acidic residues.

Its subcellular location is the membrane. This chain is Transmembrane protein 202 (TMEM202), found in Homo sapiens (Human).